We begin with the raw amino-acid sequence, 558 residues long: NAD-dependent malic enzyme 2 (558 aa).

Tyr-101 acts as the Proton donor in catalysis. Position 154 (Arg-154) interacts with NAD(+). The active-site Proton acceptor is the Lys-172. 3 residues coordinate a divalent metal cation: Glu-243, Asp-244, and Asp-267. 2 residues coordinate NAD(+): Asp-267 and Asn-411.

The protein belongs to the malic enzymes family. Homotetramer. The cofactor is Mg(2+). Mn(2+) serves as cofactor.

It catalyses the reaction (S)-malate + NAD(+) = pyruvate + CO2 + NADH. The catalysed reaction is oxaloacetate + H(+) = pyruvate + CO2. The polypeptide is NAD-dependent malic enzyme 2 (Photobacterium profundum (strain SS9)).